The chain runs to 321 residues: L-carnitine dehydrogenase (321 aa).

Residue 14 to 19 participates in NAD(+) binding; sequence GSGVIG.

The protein belongs to the 3-hydroxyacyl-CoA dehydrogenase family. L-carnitine dehydrogenase subfamily. In terms of assembly, homodimer.

Its subcellular location is the cytoplasm. It catalyses the reaction carnitine + NAD(+) = 3-dehydrocarnitine + NADH + H(+). The protein operates within amine and polyamine metabolism; carnitine metabolism. Its function is as follows. Catalyzes the NAD(+)-dependent oxidation of L-carnitine to 3-dehydrocarnitine. In Pseudomonas putida (strain ATCC 47054 / DSM 6125 / CFBP 8728 / NCIMB 11950 / KT2440), this protein is L-carnitine dehydrogenase.